Here is a 234-residue protein sequence, read N- to C-terminus: Leucyl/phenylalanyl-tRNA--protein transferase (234 aa).

The protein belongs to the L/F-transferase family.

The protein localises to the cytoplasm. It catalyses the reaction N-terminal L-lysyl-[protein] + L-leucyl-tRNA(Leu) = N-terminal L-leucyl-L-lysyl-[protein] + tRNA(Leu) + H(+). The catalysed reaction is N-terminal L-arginyl-[protein] + L-leucyl-tRNA(Leu) = N-terminal L-leucyl-L-arginyl-[protein] + tRNA(Leu) + H(+). It carries out the reaction L-phenylalanyl-tRNA(Phe) + an N-terminal L-alpha-aminoacyl-[protein] = an N-terminal L-phenylalanyl-L-alpha-aminoacyl-[protein] + tRNA(Phe). Its function is as follows. Functions in the N-end rule pathway of protein degradation where it conjugates Leu, Phe and, less efficiently, Met from aminoacyl-tRNAs to the N-termini of proteins containing an N-terminal arginine or lysine. The polypeptide is Leucyl/phenylalanyl-tRNA--protein transferase (Salmonella paratyphi A (strain ATCC 9150 / SARB42)).